A 597-amino-acid polypeptide reads, in one-letter code: Elongation factor 4 (597 aa).

The 183-residue stretch at 2-184 (KHIRNFSIIA…KIVSAIPAPE (183 aa)) folds into the tr-type G domain. Residues 14–19 (DHGKST) and 131–134 (NKID) contribute to the GTP site.

The protein belongs to the TRAFAC class translation factor GTPase superfamily. Classic translation factor GTPase family. LepA subfamily.

Its subcellular location is the cell inner membrane. It catalyses the reaction GTP + H2O = GDP + phosphate + H(+). In terms of biological role, required for accurate and efficient protein synthesis under certain stress conditions. May act as a fidelity factor of the translation reaction, by catalyzing a one-codon backward translocation of tRNAs on improperly translocated ribosomes. Back-translocation proceeds from a post-translocation (POST) complex to a pre-translocation (PRE) complex, thus giving elongation factor G a second chance to translocate the tRNAs correctly. Binds to ribosomes in a GTP-dependent manner. The polypeptide is Elongation factor 4 (Vibrio vulnificus (strain CMCP6)).